The primary structure comprises 186 residues: uncharacterized protein (186 aa).

This is an uncharacterized protein from Acanthamoeba polyphaga mimivirus (APMV).